Here is a 352-residue protein sequence, read N- to C-terminus: rRNA 2'-O-methyltransferase fibrillarin (352 aa).

The disordered stretch occupies residues 1–115 (MGRPEFNRGG…GGAGGMRGGK (115 aa)). Asymmetric dimethylarginine occurs at positions 8, 16, 19, 23, 27, 35, 43, 51, 55, 58, 63, 67, 70, 75, 81, 85, 91, 95, 98, 102, 105, and 112. Residues 8 to 18 (RGGGGGGFRGG) are compositionally biased toward gly residues. Residues 26–59 (SRGGFGGGGRGGYGGGDRGSFGGGDRGGFRGGRG) show a composition bias toward gly residues. Positions 66–113 (FRGGRGGGDRGGFGGRGSPRGGFGGRGSPRGGRGSPRGGRGGAGGMRG) are enriched in gly residues. S-adenosyl-L-methionine contacts are provided by residues 203–204 (TT), 222–223 (EF), 247–248 (DA), and 267–270 (DVAQ).

This sequence belongs to the methyltransferase superfamily. Fibrillarin family. Component of box C/D small nucleolar ribonucleoprotein (snoRNP) particles. It is associated with the U3, U8 and U13 small nuclear RNAs. By homology to other fibrillarins, some or all of the N-terminal domain arginines are modified to asymmetric dimethylarginine (DMA).

The protein resides in the nucleus. It is found in the nucleolus. Its subcellular location is the nucleoplasm. The catalysed reaction is L-glutaminyl-[histone H2A] + S-adenosyl-L-methionine = N(5)-methyl-L-glutaminyl-[histone H2A] + S-adenosyl-L-homocysteine + H(+). Its function is as follows. S-adenosyl-L-methionine-dependent methyltransferase that has the ability to methylate both RNAs and proteins. Involved in pre-rRNA processing. Utilizes the methyl donor S-adenosyl-L-methionine to catalyze the site-specific 2'-hydroxyl methylation of ribose moieties in pre-ribosomal RNA. Site specificity is provided by a guide RNA that base pairs with the substrate. Methylation occurs at a characteristic distance from the sequence involved in base pairing with the guide RNA. Also acts as a protein methyltransferase by mediating methylation of 'Gln-105' of histone H2A (H2AQ105me), a modification that impairs binding of the FACT complex and is specifically present at 35S ribosomal DNA locus. Plays a role in modulation of nucleolus size most likely through regulating the ribosomal RNA (rRNA) pool. This chain is rRNA 2'-O-methyltransferase fibrillarin, found in Caenorhabditis elegans.